Here is a 327-residue protein sequence, read N- to C-terminus: Cyclin-A3-3 (327 aa).

This sequence belongs to the cyclin family. Cyclin AB subfamily.

This Arabidopsis thaliana (Mouse-ear cress) protein is Cyclin-A3-3 (CYCA3-3).